Reading from the N-terminus, the 514-residue chain is Folylpolyglutamate synthase (514 aa).

82–85 lines the ATP pocket; it reads GKGS. Residues Ser-107, Glu-186, and His-214 each coordinate Mg(2+). The ATP site is built by Arg-339 and Asp-355.

Belongs to the folylpolyglutamate synthase family. It depends on a monovalent cation as a cofactor.

It localises to the mitochondrion inner membrane. The protein resides in the mitochondrion matrix. It is found in the cytoplasm. The catalysed reaction is (6S)-5,6,7,8-tetrahydrofolyl-(gamma-L-Glu)(n) + L-glutamate + ATP = (6S)-5,6,7,8-tetrahydrofolyl-(gamma-L-Glu)(n+1) + ADP + phosphate + H(+). It participates in cofactor biosynthesis; tetrahydrofolylpolyglutamate biosynthesis. In terms of biological role, catalyzes conversion of folates to polyglutamate derivatives allowing concentration of folate compounds in the cell and the intracellular retention of these cofactors, which are important substrates for most of the folate-dependent enzymes that are involved in one-carbon transfer reactions involved in purine, pyrimidine and amino acid synthesis. In Candida albicans (Yeast), this protein is Folylpolyglutamate synthase (MET7).